The chain runs to 314 residues: Three-prime repair exonuclease 1 (314 aa).

Residues Asp18 and Glu20 each contribute to the Mg(2+) site. 20 to 21 (EA) is a substrate binding site. Ser78 bears the Phosphoserine mark. Substrate is bound at residue Tyr129. Phosphoserine is present on Ser167. The active-site Proton donor/acceptor is the His195. Asp200 lines the Mg(2+) pocket. Asp200 contacts substrate. The necessary for endoplasmic reticulum localization stretch occupies residues 236–314 (TASARTKPRP…YGLSLATPGE (79 aa)). Residues 240 to 278 (RTKPRPSAVTTTAHLATTRNTSPSLGESRGTKDLPPVKD) form a disordered region. The tract at residues 243–314 (PRPSAVTTTA…YGLSLATPGE (72 aa)) is interaction with UBQLN1. Residues 247–260 (AVTTTAHLATTRNT) are compositionally biased toward low complexity. A Phosphoserine modification is found at Ser261. Residues 281 to 314 (ALSREGLLAPLGLLAILTLAVATLYGLSLATPGE) are necessary for cytoplasmic retention.

Belongs to the exonuclease superfamily. TREX family. Homodimer. Interacts (via proline-rich region) with TCERG1/CA150 (via the second WW domain). Component of the SET complex, composed of at least ANP32A, APEX1, HMGB2, NME1, SET and TREX1. Within this complex, directly interacts with SET; this interaction does not result in TREX1 inhibition. Also interacts with NME1, but only following translocation to the nucleus. Directly interacts with UBQLN1 (via ubiquitin-like domain); the interaction may control TREX1 subcellular location. Mg(2+) serves as cofactor. Ubiquitinated, but not targeted to proteasomal degradation. Ubiquitination may be important for interaction with UBQLN1. Detected in thymus, spleen, liver, brain, heart, small intestine and colon.

It is found in the nucleus. The protein localises to the cytoplasm. Its subcellular location is the cytosol. It localises to the endoplasmic reticulum membrane. It carries out the reaction Exonucleolytic cleavage in the 3'- to 5'-direction to yield nucleoside 5'-phosphates.. Functionally, major cellular 3'-to-5' DNA exonuclease which digests single-stranded DNA (ssDNA) and double-stranded DNA (dsDNA) with mismatched 3' termini. Prevents cell-intrinsic initiation of autoimmunity. Acts by metabolizing DNA fragments from endogenous retroelements, including L1, LTR and SINE elements. Plays a key role in degradation of DNA fragments at cytosolic micronuclei arising from genome instability: its association with the endoplasmic reticulum membrane directs TREX1 to ruptured micronuclei, leading to micronuclear DNA degradation. Micronuclear DNA degradation is required to limit CGAS activation and subsequent inflammation. Unless degraded, these DNA fragments accumulate in the cytosol and activate the cGAS-STING innate immune signaling, leading to the production of type I interferon. Prevents chronic ATM-dependent checkpoint activation, by processing ssDNA polynucleotide species arising from the processing of aberrant DNA replication intermediates. Inefficiently degrades oxidized DNA, such as that generated upon antimicrobial reactive oxygen production or upon absorption of UV light. During GZMA-mediated cell death, contributes to DNA damage in concert with NME1. NME1 nicks one strand of DNA and TREX1 removes bases from the free 3' end to enhance DNA damage and prevent DNA end reannealing and rapid repair. The polypeptide is Three-prime repair exonuclease 1 (Homo sapiens (Human)).